The sequence spans 183 residues: ATP synthase subunit b, chloroplastic (183 aa).

Residues 27 to 49 (LATNLINLTVVVGVLIFFGKGVL) form a helical membrane-spanning segment.

It belongs to the ATPase B chain family. In terms of assembly, F-type ATPases have 2 components, F(1) - the catalytic core - and F(0) - the membrane proton channel. F(1) has five subunits: alpha(3), beta(3), gamma(1), delta(1), epsilon(1). F(0) has four main subunits: a(1), b(1), b'(1) and c(10-14). The alpha and beta chains form an alternating ring which encloses part of the gamma chain. F(1) is attached to F(0) by a central stalk formed by the gamma and epsilon chains, while a peripheral stalk is formed by the delta, b and b' chains.

It is found in the plastid. Its subcellular location is the chloroplast thylakoid membrane. F(1)F(0) ATP synthase produces ATP from ADP in the presence of a proton or sodium gradient. F-type ATPases consist of two structural domains, F(1) containing the extramembraneous catalytic core and F(0) containing the membrane proton channel, linked together by a central stalk and a peripheral stalk. During catalysis, ATP synthesis in the catalytic domain of F(1) is coupled via a rotary mechanism of the central stalk subunits to proton translocation. In terms of biological role, component of the F(0) channel, it forms part of the peripheral stalk, linking F(1) to F(0). The protein is ATP synthase subunit b, chloroplastic of Lolium perenne (Perennial ryegrass).